Consider the following 116-residue polypeptide: Large ribosomal subunit protein bL17 (116 aa).

The protein belongs to the bacterial ribosomal protein bL17 family. As to quaternary structure, part of the 50S ribosomal subunit. Contacts protein L32.

In Aliarcobacter butzleri (strain RM4018) (Arcobacter butzleri), this protein is Large ribosomal subunit protein bL17.